A 481-amino-acid chain; its full sequence is GTPase Obg (481 aa).

The Obg domain maps to 2-159 (TTFVDRVVLH…LDAVLELKSV (158 aa)). In terms of domain architecture, OBG-type G spans 160 to 330 (ADIGLVGYPS…LMFAMGELVA (171 aa)). GTP contacts are provided by residues 166–173 (GYPSAGKS), 191–195 (FTTLV), 212–215 (DVPG), 282–285 (NKID), and 311–313 (SAA). The Mg(2+) site is built by Ser-173 and Thr-193. The OCT domain maps to 348 to 426 (PKAVDDAGFT…IGEREFDWHP (79 aa)). The tract at residues 440–481 (DQRLAEKTQRPSAAERLAARKARRQRPGDEPESDELDGDSGE) is disordered. Acidic residues predominate over residues 469 to 481 (EPESDELDGDSGE).

It belongs to the TRAFAC class OBG-HflX-like GTPase superfamily. OBG GTPase family. Monomer. The cofactor is Mg(2+).

The protein resides in the cytoplasm. In terms of biological role, an essential GTPase which binds GTP, GDP and possibly (p)ppGpp with moderate affinity, with high nucleotide exchange rates and a fairly low GTP hydrolysis rate. Plays a role in control of the cell cycle, stress response, ribosome biogenesis and in those bacteria that undergo differentiation, in morphogenesis control. This chain is GTPase Obg, found in Salinispora arenicola (strain CNS-205).